The primary structure comprises 353 residues: Fe(3+) ions import ATP-binding protein FbpC (353 aa).

The 231-residue stretch at 9–239 (VTFENVTKKF…PASAFIADFM (231 aa)) folds into the ABC transporter domain. ATP is bound at residue 41–48 (GLSGCGKT).

The protein belongs to the ABC transporter superfamily. Fe(3+) ion importer (TC 3.A.1.10) family. As to quaternary structure, the complex is composed of two ATP-binding proteins (FbpC), two transmembrane proteins (FbpB) and a solute-binding protein (FbpA).

The protein localises to the cell inner membrane. The enzyme catalyses Fe(3+)(out) + ATP + H2O = Fe(3+)(in) + ADP + phosphate + H(+). Functionally, part of the ABC transporter complex FbpABC involved in Fe(3+) ions import. Responsible for energy coupling to the transport system. This is Fe(3+) ions import ATP-binding protein FbpC from Brucella melitensis biotype 1 (strain ATCC 23456 / CCUG 17765 / NCTC 10094 / 16M).